An 806-amino-acid chain; its full sequence is Lon protease 1 (806 aa).

Residues 31–235 enclose the Lon N-terminal domain; sequence VPLIAVPSHP…KVLELIYEEL (205 aa). 389-396 provides a ligand contact to ATP; the sequence is GPPGVGKT. The 181-residue stretch at 626–806 folds into the Lon proteolytic domain; that stretch reads AMYSGMVMGL…NMREVIKLLF (181 aa). Active-site residues include serine 714 and lysine 757.

It belongs to the peptidase S16 family. Homohexamer. Organized in a ring with a central cavity.

It localises to the cytoplasm. It catalyses the reaction Hydrolysis of proteins in presence of ATP.. ATP-dependent serine protease that mediates the selective degradation of mutant and abnormal proteins as well as certain short-lived regulatory proteins. Required for cellular homeostasis and for survival from DNA damage and developmental changes induced by stress. Degrades polypeptides processively to yield small peptide fragments that are 5 to 10 amino acids long. Binds to DNA in a double-stranded, site-specific manner. In Borreliella burgdorferi (strain ATCC 35210 / DSM 4680 / CIP 102532 / B31) (Borrelia burgdorferi), this protein is Lon protease 1.